A 243-amino-acid polypeptide reads, in one-letter code: DNA repair protein RecO (243 aa).

Belongs to the RecO family.

In terms of biological role, involved in DNA repair and RecF pathway recombination. This Xylella fastidiosa (strain M23) protein is DNA repair protein RecO.